Consider the following 663-residue polypeptide: Zinc finger protein 44 (663 aa).

The 87-residue stretch at 52 to 138 (VAFEDVAVNF…GETLSQIRNS (87 aa)) folds into the KRAB domain. Residues 189-211 (YTHKQCGKGLSYRHSFQTCERPH) form a C2H2-type 1; atypical zinc finger. The C2H2-type 2; degenerate zinc-finger motif lies at 217–239 (YDCKECGKTFSSPGNLRRHMVVK). 15 consecutive C2H2-type zinc fingers follow at residues 245–267 (YKCE…ERTH), 273–295 (YECK…EKIH), 301–323 (YECK…ERTH), 329–351 (YKCK…ERIH), 357–379 (YTCK…MIMH), 385–407 (HKCK…EGTH), 413–435 (YECK…MMAH), 441–463 (HKCT…ERTH), 469–491 (YECK…ETTH), 497–518 (YKCK…ETTH), 524–546 (YECK…ERTH), 552–574 (YECQ…ERTH), 580–602 (YECK…ERTH), 608–630 (YECK…ERTH), and 636–658 (YECK…KRTH).

Belongs to the krueppel C2H2-type zinc-finger protein family.

The protein localises to the nucleus. In terms of biological role, may be involved in transcriptional regulation. In Homo sapiens (Human), this protein is Zinc finger protein 44 (ZNF44).